Consider the following 146-residue polypeptide: uncharacterized protein (146 aa).

An HTH marR-type domain is found at 9-141; the sequence is VADIEKSLRH…FEKSLMKLQH (133 aa). Positions 55-78 form a DNA-binding region, H-T-H motif; sequence IGELSGKMYLACSTTTDLIDRMQK.

This is an uncharacterized protein from Bacillus subtilis (strain 168).